The primary structure comprises 118 residues: Large ribosomal subunit protein uL18 (118 aa).

It belongs to the universal ribosomal protein uL18 family. Part of the 50S ribosomal subunit; part of the 5S rRNA/L5/L18/L25 subcomplex. Contacts the 5S and 23S rRNAs.

Functionally, this is one of the proteins that bind and probably mediate the attachment of the 5S RNA into the large ribosomal subunit, where it forms part of the central protuberance. This is Large ribosomal subunit protein uL18 from Rickettsia conorii (strain ATCC VR-613 / Malish 7).